We begin with the raw amino-acid sequence, 495 residues long: Ankyrin repeat domain-containing protein 34A (495 aa).

ANK repeat units lie at residues 4-33 (TEGH…YVNE), 37-72 (QGET…DPNI), 76-106 (LGRT…DPSV), and 110-139 (AGAS…AKGT). N5-methylglutamine is present on Gln-15. 2 stretches are compositionally biased toward polar residues: residues 147-162 (DTSP…YLNS) and 180-191 (VCTSPSEVQLQT). Positions 147 to 495 (DTSPSGTKKT…SLGGPGEPGR (349 aa)) are disordered. Residues 203–213 (AQEEEEKRDVF) are compositionally biased toward basic and acidic residues. Over residues 223–232 (DPSPSEPLPK) the composition is skewed to pro residues. Residues 233 to 242 (PPRHPPKPLK) show a composition bias toward basic residues. At Thr-315 the chain carries Phosphothreonine. Polar residues predominate over residues 375–385 (SVSSPRQSQES). Positions 462–472 (RTKRKLVRRHS) are enriched in basic residues. The segment covering 485-495 (QSLGGPGEPGR) has biased composition (gly residues).

Belongs to the ANKRD34 family. Methylated at Gln-15 by N6AMT1.

This Rattus norvegicus (Rat) protein is Ankyrin repeat domain-containing protein 34A (Ankrd34a).